The sequence spans 85 residues: MSIFDYFRAKRAPTSASLAKERLQIIVAHERNKRSLQQPDYLPQMREEIIAVIRKYIPIDSSQVSVNVDNSENCSVLELNITLPD.

It belongs to the MinE family.

Prevents the cell division inhibition by proteins MinC and MinD at internal division sites while permitting inhibition at polar sites. This ensures cell division at the proper site by restricting the formation of a division septum at the midpoint of the long axis of the cell. The protein is Cell division topological specificity factor of Cellvibrio japonicus (strain Ueda107) (Pseudomonas fluorescens subsp. cellulosa).